The following is an 861-amino-acid chain: MQEQYRPDMIEPKVQQYWAENKVFKAIKDESKEKYYCLSMFPYPSGRLHMGHVRNYTIGDVISRYQRMLGKNVLQPFGWDAFGLPAEGAAIKNKTAPAKWTYENIAYMKKQLQLLGFGFDWDREIATCKPDYYKWEQWFFTELYKKGLVYKKTSTVNWCPNDETVLANEQVHEGCCWRCDTPVEQKEIPQWFIKITDYAEQLLGGLDTLPQWPDMVKTMQRNWIGRSEGVEITFDVANTNEKVAVYTTRPDTFYGVSYLGIAAAHPLASLAAQNNSELAAFIQEAKNAKVAEADLATMEKKGMATGLFAIHPLTGEKLPIWVANFVLMHYGTGAVMAVPAHDQRDFEFAQKYGLQIKQVIEPIADEEIDLTKQAFTEHGKLVNSAEFDGKDFDGAFNGIADKLEKLGVGKRQVNYRLRDWGVSRQRYWGAPIPMLTLENGDVVPAPMEDLPIILPEDVVMDGVKSPIKADLNWAKTTLNGAPALKETDTFDTFMESSWYYARYTCPQYQNGMLDAEEANYWLPVDQYIGGIEHATMHLLYFRFFHKLLRDAGFVTSDEPADKLLCQGMVLADAFYYTSPTNERIWVSPTQVTLERDEKGRIIKATDPEGRELVHSGMTKMSKSKNNGIDPQEMVEKYGADTVRLFMMFASPAEMTLEWQESGVEGAKRFLGRVWNLVYQYQQNPAKTSLDLTALSAEQKVLRREVHKTIAKVSDDIGRRQTFNTAIAAVMELMNKLTKASLDSEQDRAVMAEALSAVVRMLYPITPHICFELWQALGNESAIDTAEWVKADEAAMVEDEKLIVVQVNGKVRGKVTVAADADEDTVKTIAFADENVKKFIDNQHIVKVIYVVGKLLNVVVKP.

A 'HIGH' region motif is present at residues 42–52 (PYPSGRLHMGH). The 'KMSKS' region motif lies at 619 to 623 (KMSKS). Lys-622 contacts ATP.

The protein belongs to the class-I aminoacyl-tRNA synthetase family.

Its subcellular location is the cytoplasm. The catalysed reaction is tRNA(Leu) + L-leucine + ATP = L-leucyl-tRNA(Leu) + AMP + diphosphate. This is Leucine--tRNA ligase from Haemophilus influenzae (strain PittEE).